The chain runs to 655 residues: Putative calcium up-regulated protein J (655 aa).

Residues 40–181 (KSRAMLKGDN…DNVCFQWDLE (142 aa)) form the Ricin B-type lectin domain.

It belongs to the cup family.

The chain is Putative calcium up-regulated protein J (cupJ) from Dictyostelium discoideum (Social amoeba).